A 140-amino-acid chain; its full sequence is Glycine cleavage system H protein (140 aa).

One can recognise a Lipoyl-binding domain in the interval 22–104; that stretch reads EVVIGITRFA…YGKGWMLRLK (83 aa). Lys-63 is modified (N6-lipoyllysine).

The protein belongs to the GcvH family. As to quaternary structure, the glycine cleavage system is composed of four proteins: P, T, L and H. (R)-lipoate serves as cofactor.

In terms of biological role, the glycine cleavage system catalyzes the degradation of glycine. The H protein shuttles the methylamine group of glycine from the P protein to the T protein. This is Glycine cleavage system H protein from Magnetococcus marinus (strain ATCC BAA-1437 / JCM 17883 / MC-1).